The primary structure comprises 547 residues: Leiomodin-2 (547 aa).

The interval 1-47 is interaction with tropomyosin alpha; sequence MSTFGYRRGLSKYESIDEDELLASLSAEELKELERELEDIEPDRNLP. 3 interaction with actin regions span residues 1-161, 162-497, and 521-540; these read MSTF…SDNS, KPKI…KEIK, and AHENLMEAIRGSSIKQLKRV. Serine 11, serine 15, and serine 24 each carry phosphoserine. Residues 16-41 are a coiled coil; sequence IDEDELLASLSAEELKELERELEDIE. Disordered regions lie at residues 91–162 and 352–533; these read KVAE…DNSK and MDKQ…RGSS. 2 stretches are compositionally biased toward acidic residues: residues 95–104 and 112–139; these read DKEESEEELI and VSEEVYTEEEEEESQEEEEEEDSDEEER. A coiled-coil region spans residues 113–148; sequence SEEVYTEEEEEESQEEEEEEDSDEEERTIETAKGIN. The span at 149 to 160 shows a compositional bias: polar residues; it reads GTVNYDSVNSDN. A compositionally biased stretch (basic and acidic residues) spans 352–367; sequence MDKQRQKRLQEQKQQE. Residue serine 400 is modified to Phosphoserine. Residues 419 to 449 show a composition bias toward pro residues; that stretch reads ATPPPPPPPPPPPPPSSQRLPPPPPPPPPPL. Residues 465–475 are compositionally biased toward polar residues; that stretch reads QQESAQRALQN. Basic residues predominate over residues 477 to 487; sequence QKKKKGKKVKK. Residues 494-512 are compositionally biased toward basic and acidic residues; it reads KEIKNSLRSVQEKKMEDSS. The region spanning 521 to 540 is the WH2 domain; the sequence is AHENLMEAIRGSSIKQLKRV.

It belongs to the tropomodulin family. Can bind at least three actin monomers and thereby provides a nucleus for actin filament formation. Interacts (via N-terminus) with tropomyosin alpha (TPM1) (via N-terminus). May also interact with TPM2 (via N-terminus). Interacts with FLII. In terms of tissue distribution, specifically expressed in heart and skeletal muscles, with higher levels in heart (at protein level). Not expressed in other tissues.

It localises to the cytoplasm. The protein resides in the myofibril. The protein localises to the sarcomere. Its subcellular location is the m line. It is found in the cytoskeleton. Functionally, mediates nucleation of actin filaments and thereby promotes actin polymerization. Plays a role in the regulation of actin filament length. Required for normal sarcomere organization in the heart, and for normal heart function. This Homo sapiens (Human) protein is Leiomodin-2 (LMOD2).